A 392-amino-acid polypeptide reads, in one-letter code: MSDELDSYRAKHYNSDDPIVRLLEEKIESLTKELEKLRQDLNWYKGELEKLLAPPYIEAIVLDILPDGKVIVRSSSGPNLIVNVSSNIDIKKLKPGSLVALTQRGSTIVEVLPEREDAYVKSFEVIEKPNVHYSDIGGLNEQINEIREVIELPLKNPELFKEIGIDPPKGVLLYGPPGTGKTLLAKAVATESNATFIQVVASEFAQKFVGEGARIVREVFELARRKAPSIVFIDEIDAIGAKRVDMGTSGEREIQRTLMQLLAEIDGFKPLDNVKIIAATNRLDILDPALLRPGRFDRLIEVPLPNFEGRKEIFRIYLQKMKTDGNIRYDILASMTEGFSGAEIKNVCTEAGYIAIRNGRKYVNMTDLITAIEKIKAKNNKAKNTDRTEKYV.

Residues 19 to 53 adopt a coiled-coil conformation; sequence IVRLLEEKIESLTKELEKLRQDLNWYKGELEKLLA. ATP-binding positions include 178 to 183 and Y317; that span reads GTGKTL. The tract at residues 390-392 is docks into pockets in the proteasome alpha-ring to cause gate opening; the sequence is KYV.

The protein belongs to the AAA ATPase family. As to quaternary structure, homohexamer. The hexameric complex has a two-ring architecture resembling a top hat that caps the 20S proteasome core at one or both ends. Upon ATP-binding, the C-terminus of PAN interacts with the alpha-rings of the proteasome core by binding to the intersubunit pockets.

It localises to the cytoplasm. ATPase which is responsible for recognizing, binding, unfolding and translocation of substrate proteins into the archaeal 20S proteasome core particle. Is essential for opening the gate of the 20S proteasome via an interaction with its C-terminus, thereby allowing substrate entry and access to the site of proteolysis. Thus, the C-termini of the proteasomal ATPase function like a 'key in a lock' to induce gate opening and therefore regulate proteolysis. Unfolding activity requires energy from ATP hydrolysis, whereas ATP binding alone promotes ATPase-20S proteasome association which triggers gate opening, and supports translocation of unfolded substrates. In Sulfurisphaera tokodaii (strain DSM 16993 / JCM 10545 / NBRC 100140 / 7) (Sulfolobus tokodaii), this protein is Proteasome-activating nucleotidase.